Here is a 103-residue protein sequence, read N- to C-terminus: Histone H4 (103 aa).

A compositionally biased stretch (gly residues) spans 1–14 (MSGRGKGGKGLGKG). A disordered region spans residues 1-20 (MSGRGKGGKGLGKGGAKRHR). Residue Lys-6 is modified to N6-acetyl-N6-methyllysine; alternate. N6-methyllysine; alternate is present on residues Lys-6, Lys-9, and Lys-13. At Lys-13 the chain carries N6-acetyl-N6-methyllysine; alternate. A DNA-binding region spans residues 17-21 (KRHRK). An N6-glutaryllysine modification is found at Lys-92.

Belongs to the histone H4 family. The nucleosome is a histone octamer containing two molecules each of H2A, H2B, H3 and H4 assembled in one H3-H4 heterotetramer and two H2A-H2B heterodimers. The octamer wraps approximately 147 bp of DNA. In terms of processing, glutarylation at Lys-92 (H4K91glu) destabilizes nucleosomes by promoting dissociation of the H2A-H2B dimers from nucleosomes.

The protein resides in the nucleus. It localises to the chromosome. Its function is as follows. Core component of nucleosome. Nucleosomes wrap and compact DNA into chromatin, limiting DNA accessibility to the cellular machineries which require DNA as a template. Histones thereby play a central role in transcription regulation, DNA repair, DNA replication and chromosomal stability. DNA accessibility is regulated via a complex set of post-translational modifications of histones, also called histone code, and nucleosome remodeling. The polypeptide is Histone H4 (H4.1) (Phanerodontia chrysosporium (White-rot fungus)).